Here is a 259-residue protein sequence, read N- to C-terminus: 3-deoxy-manno-octulosonate cytidylyltransferase (259 aa).

This sequence belongs to the KdsB family.

The protein resides in the cytoplasm. The enzyme catalyses 3-deoxy-alpha-D-manno-oct-2-ulosonate + CTP = CMP-3-deoxy-beta-D-manno-octulosonate + diphosphate. Its pathway is nucleotide-sugar biosynthesis; CMP-3-deoxy-D-manno-octulosonate biosynthesis; CMP-3-deoxy-D-manno-octulosonate from 3-deoxy-D-manno-octulosonate and CTP: step 1/1. It functions in the pathway bacterial outer membrane biogenesis; lipopolysaccharide biosynthesis. In terms of biological role, activates KDO (a required 8-carbon sugar) for incorporation into bacterial lipopolysaccharide in Gram-negative bacteria. This is 3-deoxy-manno-octulosonate cytidylyltransferase from Xanthomonas euvesicatoria pv. vesicatoria (strain 85-10) (Xanthomonas campestris pv. vesicatoria).